A 396-amino-acid polypeptide reads, in one-letter code: Peroxisome proliferator-activated receptor delta (396 aa).

Positions 1–24 (MKEEIPPRSPILDEQPSTPLEHQE) are disordered. The segment covering 15 to 24 (QPSTPLEHQE) has biased composition (polar residues). The segment at residues 28–102 (SVDCKICGDR…LGMSHNAIRF (75 aa)) is a DNA-binding region (nuclear receptor). 2 NR C4-type zinc fingers span residues 31 to 51 (CKICGDRASGFHYGVHACEGC) and 68 to 90 (CDRNCKIQKKNRNKCQYCRFNKC). The NR LBD domain occupies 166-394 (FVIHDMDTLW…HPLLQEIYRD (229 aa)).

This sequence belongs to the nuclear hormone receptor family. NR1 subfamily. In terms of assembly, heterodimer with the retinoid X receptor. In terms of processing, 'Lys-48'-linked polyubiquitinated; leading to proteasomal degradation. Deubiquitinated and stabilized by OTUD3. As to expression, ubiquitous.

The protein localises to the nucleus. Functionally, ligand-activated transcription factor key mediator of energy metabolism in adipose tissues. Receptor that binds peroxisome proliferators such as hypolipidemic drugs and fatty acids. Has a preference for poly-unsaturated fatty acids, such as gamma-linoleic acid and eicosapentanoic acid. Once activated by a ligand, the receptor binds to promoter elements of target genes. Regulates the peroxisomal beta-oxidation pathway of fatty acids. Functions as a transcription activator for the acyl-CoA oxidase gene. Decreases expression of NPC1L1 once activated by a ligand. The polypeptide is Peroxisome proliferator-activated receptor delta (ppard) (Xenopus laevis (African clawed frog)).